An 86-amino-acid polypeptide reads, in one-letter code: Apolipoprotein C-I (86 aa).

The first 26 residues, 1-26 (MRLFLSLPVLVVVLLMILEGPGPAQG), serve as a signal peptide directing secretion.

Belongs to the apolipoprotein C1 family.

The protein resides in the secreted. Functionally, inhibitor of lipoprotein binding to the low density lipoprotein (LDL) receptor, LDL receptor-related protein, and very low density lipoprotein (VLDL) receptor. Associates with high density lipoproteins (HDL) and the triacylglycerol-rich lipoproteins in the plasma and makes up about 10% of the protein of the VLDL and 2% of that of HDL. Appears to interfere directly with fatty acid uptake and is also the major plasma inhibitor of cholesteryl ester transfer protein (CETP). Binds free fatty acids and reduces their intracellular esterification. Modulates the interaction of APOE with beta-migrating VLDL and inhibits binding of beta-VLDL to the LDL receptor-related protein. This chain is Apolipoprotein C-I (APOC1), found in Saimiri boliviensis boliviensis (Bolivian squirrel monkey).